The following is a 234-amino-acid chain: UPF0173 metal-dependent hydrolase Rleg2_1519 (234 aa).

Belongs to the UPF0173 family.

The sequence is that of UPF0173 metal-dependent hydrolase Rleg2_1519 from Rhizobium leguminosarum bv. trifolii (strain WSM2304).